We begin with the raw amino-acid sequence, 57 residues long: UPF0391 membrane protein AZOSEA39630 (57 aa).

2 helical membrane passes run 4–24 (WAII…TGVA) and 37–57 (IALA…VLVF).

Belongs to the UPF0391 family.

It is found in the cell membrane. The sequence is that of UPF0391 membrane protein AZOSEA39630 from Aromatoleum aromaticum (strain DSM 19018 / LMG 30748 / EbN1) (Azoarcus sp. (strain EbN1)).